The chain runs to 204 residues: uncharacterized protein (204 aa).

Its function is as follows. Possibly involved in pGI2 replication mechanism. This is an uncharacterized protein from Bacillus thuringiensis.